The chain runs to 986 residues: Ephrin type-A receptor 4 (986 aa).

The first 19 residues, 1 to 19 (MAGIFYFILFSFLFGICDA), serve as a signal peptide directing secretion. Residues 20-547 (VTGSRVYPAN…RIIGDGANST (528 aa)) lie on the Extracellular side of the membrane. Residues 30–209 (EVTLLDSRSV…FYKKCPLTVR (180 aa)) form the Eph LBD domain. N-linked (GlcNAc...) asparagine glycosylation is found at Asn-235, Asn-340, and Asn-408. Fibronectin type-III domains follow at residues 328 to 439 (PPSA…TNQA) and 440 to 537 (APSS…TVPS). Residues 548–569 (VLLVSVSGSVVLVVILIAAFVI) traverse the membrane as a helical segment. The Cytoplasmic portion of the chain corresponds to 570-986 (SRRRSKYSKA…QQMHGRMVPV (417 aa)). Phosphotyrosine; by autocatalysis is present on residues Tyr-596 and Tyr-602. The Protein kinase domain maps to 621–882 (IKIEKVIGVG…QIVNMLDKLI (262 aa)). Residues 627-635 (IGVGEFGEV) and Lys-653 each bind ATP. Catalysis depends on Asp-746, which acts as the Proton acceptor. Phosphotyrosine; by autocatalysis is present on residues Tyr-779 and Tyr-928. An SAM domain is found at 911–975 (SAVVSVGDWL…LSSVQAMRTQ (65 aa)). The short motif at 984 to 986 (VPV) is the PDZ-binding element.

Belongs to the protein kinase superfamily. Tyr protein kinase family. Ephrin receptor subfamily. In terms of assembly, heterotetramer upon binding of the ligand. The heterotetramer is composed of an ephrin dimer and a receptor dimer. Oligomerization is probably required to induce biological responses. Interacts (phosphorylated at position Tyr-602) with FYN. Interacts (via PDZ motif) with SIPA1L1 (via PDZ domain); controls neuronal morphology through regulation of the RAP1 (RAP1A or RAP1B) and RAP2 (RAP2A, RAP2B or RAP2C) GTPases. Interacts with CDK5, CDK5R1 and NGEF; upon activation by EFNA1 induces NGEF phosphorylation by the kinase CDK5. Interacts with CHN1; effector of EPHA4 in axon guidance linking EPHA4 activation to RAC1 regulation. Forms a ternary complex composed of ADAM10, CADH1 and EPHA4; within the complex, CADH1 is cleaved by ADAM10 which disrupts adherens junctions. As to expression, expressed in inner and outer pillar cells of the organ of Corti (at protein level). Highest expression in the adult brain and retina and also detectable in kidney, lung, skeletal muscle and thymus. Not detected in heart and liver. Expressed in myogenic progenitor cells.

The protein resides in the cell membrane. The protein localises to the cell projection. Its subcellular location is the axon. It is found in the dendrite. It localises to the postsynaptic density membrane. The protein resides in the early endosome. The protein localises to the cell junction. Its subcellular location is the adherens junction. The catalysed reaction is L-tyrosyl-[protein] + ATP = O-phospho-L-tyrosyl-[protein] + ADP + H(+). Functionally, receptor tyrosine kinase which binds membrane-bound ephrin family ligands residing on adjacent cells, leading to contact-dependent bidirectional signaling into neighboring cells. The signaling pathway downstream of the receptor is referred to as forward signaling while the signaling pathway downstream of the ephrin ligand is referred to as reverse signaling. Highly promiscuous, it has the unique property among Eph receptors to bind and to be physiologically activated by both GPI-anchored ephrin-A and transmembrane ephrin-B ligands including EFNA1 and EFNB3. Upon activation by ephrin ligands, modulates cell morphology and integrin-dependent cell adhesion through regulation of the Rac, Rap and Rho GTPases activity. Plays an important role in the development of the nervous system controlling different steps of axonal guidance including the establishment of the corticospinal projections. May also control the segregation of motor and sensory axons during neuromuscular circuit developmen. In addition to its role in axonal guidance plays a role in synaptic plasticity. Activated by EFNA1 phosphorylates CDK5 at 'Tyr-15' which in turn phosphorylates NGEF regulating RHOA and dendritic spine morphogenesis. In the nervous system, also plays a role in repair after injury preventing axonal regeneration and in angiogenesis playing a role in central nervous system vascular formation. Additionally, its promiscuity makes it available to participate in a variety of cell-cell signaling regulating for instance the development of the thymic epithelium. During development of the cochlear organ of Corti, regulates pillar cell separation by forming a ternary complex with ADAM10 and CADH1 which facilitates the cleavage of CADH1 by ADAM10 and disruption of adherens junctions. Phosphorylates CAPRIN1, promoting CAPRIN1-dependent formation of a membraneless compartment. The protein is Ephrin type-A receptor 4 (Epha4) of Mus musculus (Mouse).